Here is a 107-residue protein sequence, read N- to C-terminus: MLRLYPGPMVTEAEGKGGPEMASLSSSVVPVSFISTLRESVLDPGVGGEGASDKQRSKLSLSHSMIPAAKIHTELCLPAFFSPAGTQRRFQQPQHHLTLSIIHTAAR.

Residues 1-21 (MLRLYPGPMVTEAEGKGGPEM) are disordered.

In terms of tissue distribution, detected in retina and placenta.

The protein localises to the cytoplasm. The chain is Age-related maculopathy susceptibility protein 2 (ARMS2) from Homo sapiens (Human).